Consider the following 430-residue polypeptide: Maintenance of mitochondrial morphology protein 1 (430 aa).

The Lumenal portion of the chain corresponds to 1–70 (MSQGLIETTT…NGNTWSFTQG (70 aa)). Residues 71–91 (LVIGQISVIFIIIVFVKFFVF) form a helical membrane-spanning segment. Residues 92-430 (ADSSSHIPTK…TPGEFVNSNI (339 aa)) are Cytoplasmic-facing. One can recognise an SMP-LTD domain in the interval 159–387 (ASESLDWFNV…EPRFQVVRLP (229 aa)). The tract at residues 305–326 (GYSKENGSADSASDNDEDEDDG) is disordered. Residues 317–326 (SDNDEDEDDG) show a composition bias toward acidic residues.

It belongs to the MMM1 family. Homodimer. Component of the ER-mitochondria encounter structure (ERMES) or MDM complex, composed of MMM1, MDM10, MDM12 and MDM34. An MMM1 homodimer associates with one molecule of MDM12 on each side in a pairwise head-to-tail manner, and the SMP-LTD domains of MMM1 and MDM12 generate a continuous hydrophobic tunnel for phospholipid trafficking.

It localises to the endoplasmic reticulum membrane. Functionally, component of the ERMES/MDM complex, which serves as a molecular tether to connect the endoplasmic reticulum (ER) and mitochondria. Components of this complex are involved in the control of mitochondrial shape and protein biogenesis, and function in nonvesicular lipid trafficking between the ER and mitochondria. The MDM12-MMM1 subcomplex functions in the major beta-barrel assembly pathway that is responsible for biogenesis of all outer membrane beta-barrel proteins, and acts in a late step after the SAM complex. The MDM10-MDM12-MMM1 subcomplex further acts in the TOM40-specific pathway after the action of the MDM12-MMM1 complex. Essential for establishing and maintaining the structure of mitochondria and maintenance of mtDNA nucleoids. The sequence is that of Maintenance of mitochondrial morphology protein 1 from Candida dubliniensis (strain CD36 / ATCC MYA-646 / CBS 7987 / NCPF 3949 / NRRL Y-17841) (Yeast).